The chain runs to 152 residues: Deoxyuridine 5'-triphosphate nucleotidohydrolase (152 aa).

Residues 71–73 (RSG), Asn84, 88–90 (LID), and Met98 each bind substrate.

The protein belongs to the dUTPase family. The cofactor is Mg(2+).

It catalyses the reaction dUTP + H2O = dUMP + diphosphate + H(+). Its pathway is pyrimidine metabolism; dUMP biosynthesis; dUMP from dCTP (dUTP route): step 2/2. Functionally, this enzyme is involved in nucleotide metabolism: it produces dUMP, the immediate precursor of thymidine nucleotides and it decreases the intracellular concentration of dUTP so that uracil cannot be incorporated into DNA. This chain is Deoxyuridine 5'-triphosphate nucleotidohydrolase, found in Citrobacter koseri (strain ATCC BAA-895 / CDC 4225-83 / SGSC4696).